The primary structure comprises 188 residues: ATP-dependent protease subunit HslV (188 aa).

Residue Thr-7 is part of the active site. 3 residues coordinate Na(+): Gly-162, Cys-165, and Ser-168.

This sequence belongs to the peptidase T1B family. HslV subfamily. In terms of assembly, a double ring-shaped homohexamer of HslV is capped on each side by a ring-shaped HslU homohexamer. The assembly of the HslU/HslV complex is dependent on binding of ATP.

It is found in the cytoplasm. The catalysed reaction is ATP-dependent cleavage of peptide bonds with broad specificity.. With respect to regulation, allosterically activated by HslU binding. Protease subunit of a proteasome-like degradation complex believed to be a general protein degrading machinery. This chain is ATP-dependent protease subunit HslV, found in Thiobacillus denitrificans (strain ATCC 25259 / T1).